Reading from the N-terminus, the 251-residue chain is Triosephosphate isomerase (251 aa).

9–11 is a substrate binding site; the sequence is NWK. The active-site Electrophile is the histidine 96. Catalysis depends on glutamate 166, which acts as the Proton acceptor. Substrate contacts are provided by residues glycine 172, serine 212, and 233-234; that span reads GG.

This sequence belongs to the triosephosphate isomerase family. Homodimer.

It is found in the cytoplasm. It carries out the reaction D-glyceraldehyde 3-phosphate = dihydroxyacetone phosphate. Its pathway is carbohydrate biosynthesis; gluconeogenesis. It functions in the pathway carbohydrate degradation; glycolysis; D-glyceraldehyde 3-phosphate from glycerone phosphate: step 1/1. Involved in the gluconeogenesis. Catalyzes stereospecifically the conversion of dihydroxyacetone phosphate (DHAP) to D-glyceraldehyde-3-phosphate (G3P). The chain is Triosephosphate isomerase from Pelodictyon phaeoclathratiforme (strain DSM 5477 / BU-1).